Consider the following 340-residue polypeptide: MRISIVGITGYSGMELLRILLQHPQVEVVSLHASQDREAPVSELYPHLKGICDLKIEAFDSQEIMRRADLVFFATSSGVAKDLSKDFVEVGFPVIDLSGDHRLPGNIYKKWYQKEPAEDHVQKKFIYGLSEFADVRGERFIANPGCYATATELALIPLLQAQAIELDSIIVDAKSGLTGAGKNPAASSHFVHVHDNYVTYKLNQHQHIPEIVQQLQRFDESLQQIQFSTSLIPLNRGIVATVYSKLKEPLTQEELTAIYQECYQEKPFVRIQATLPSLHQVVGTNYTDIGFDYNHVTNILTVVAVLDNLIKGAAGQAVQNMNLMLGFPETDGLLSQPSYV.

C146 is a catalytic residue.

This sequence belongs to the NAGSA dehydrogenase family. Type 1 subfamily.

It is found in the cytoplasm. The catalysed reaction is N-acetyl-L-glutamate 5-semialdehyde + phosphate + NADP(+) = N-acetyl-L-glutamyl 5-phosphate + NADPH + H(+). The protein operates within amino-acid biosynthesis; L-arginine biosynthesis; N(2)-acetyl-L-ornithine from L-glutamate: step 3/4. Catalyzes the NADPH-dependent reduction of N-acetyl-5-glutamyl phosphate to yield N-acetyl-L-glutamate 5-semialdehyde. In Streptococcus gordonii (strain Challis / ATCC 35105 / BCRC 15272 / CH1 / DL1 / V288), this protein is N-acetyl-gamma-glutamyl-phosphate reductase.